The sequence spans 550 residues: Glucose-6-phosphate isomerase 2 (550 aa).

Glutamate 357 (proton donor) is an active-site residue. Catalysis depends on residues histidine 388 and lysine 514. A disordered region spans residues 527-550; sequence DTGALGHDSSTNGLIRHYRERHGK.

It belongs to the GPI family.

It is found in the cytoplasm. It carries out the reaction alpha-D-glucose 6-phosphate = beta-D-fructose 6-phosphate. The protein operates within carbohydrate biosynthesis; gluconeogenesis. Its pathway is carbohydrate degradation; glycolysis; D-glyceraldehyde 3-phosphate and glycerone phosphate from D-glucose: step 2/4. Functionally, catalyzes the reversible isomerization of glucose-6-phosphate to fructose-6-phosphate. In Chromobacterium violaceum (strain ATCC 12472 / DSM 30191 / JCM 1249 / CCUG 213 / NBRC 12614 / NCIMB 9131 / NCTC 9757 / MK), this protein is Glucose-6-phosphate isomerase 2.